A 31-amino-acid chain; its full sequence is Conotoxin pc6b (31 aa).

Intrachain disulfides connect Cys-2–Cys-20, Cys-9–Cys-25, and Cys-19–Cys-29.

This sequence belongs to the conotoxin O1 superfamily. As to expression, expressed by the venom duct.

The protein resides in the secreted. In Conus pictus (Cone snail), this protein is Conotoxin pc6b.